Consider the following 447-residue polypeptide: Vasoactive intestinal polypeptide receptor (447 aa).

Residues 1 to 103 (MCDVVNEIEL…VDDDSFFRSV (103 aa)) are Extracellular-facing. Cystine bridges form between C15-C36, C27-C69, and C50-C86. N17, N22, N64, and N91 each carry an N-linked (GlcNAc...) asparagine glycan. A helical transmembrane segment spans residues 104–128 (KIGYTIGHSVSLISLTTAIVILCMS). Residues 129–135 (RKLHCTR) are Cytoplasmic-facing. A helical membrane pass occupies residues 136 to 155 (NYIHMHLFVSFILKAIAVFV). The Extracellular segment spans residues 156 to 178 (KDAVLYDVIQESDNCSTASVGCK). N169 carries N-linked (GlcNAc...) asparagine glycosylation. C177 and C247 form a disulfide bridge. Residues 179 to 202 (AVIVFFQYCIMASFFWLLVEGLYL) form a helical membrane-spanning segment. Residues 203–216 (HALLAVSFFSERKY) are Cytoplasmic-facing. A helical membrane pass occupies residues 217-238 (FWWYILIGWGGPTIFIMAWSFA). Topologically, residues 239–256 (KAYFNDVGCWDIIENSDL) are extracellular. A helical transmembrane segment spans residues 257-280 (FWWIIKTPILASILMNFILFICII). Topologically, residues 281-305 (RILRQKINCPDIGRNESNQYSRLAK) are cytoplasmic. A helical membrane pass occupies residues 306-325 (STLLLIPLFGINFIIFAFIP). At 326–337 (ENIKTELRLVFD) the chain is on the extracellular side. Residues 338 to 357 (LILGSFQGFVVAVLYCFLNG) form a helical membrane-spanning segment. The Cytoplasmic portion of the chain corresponds to 358–447 (EVQAEIKRKW…KGHEDVREVS (90 aa)).

This sequence belongs to the G-protein coupled receptor 2 family.

The protein localises to the cell membrane. In terms of biological role, this is a receptor for VIP. The activity of this receptor is mediated by G proteins which activate adenylyl cyclase. This Carassius auratus (Goldfish) protein is Vasoactive intestinal polypeptide receptor (vipr1).